Consider the following 114-residue polypeptide: Probable acid stress chaperone HdeA (114 aa).

Positions 1–26 (MIKALFNKNTALAAVAILALSGGAMA) are cleaved as a signal peptide. The cysteines at positions 46 and 94 are disulfide-linked.

The protein belongs to the HdeA family.

It localises to the periplasm. Functionally, required for optimal acid stress protection. Exhibits a chaperone-like activity only at low pH by suppressing non-specifically the aggregation of denaturated periplasmic proteins. Contributes to acid resistance. Not required for wild-type virulence in the BALB/c mouse model. In Brucella abortus (strain 2308), this protein is Probable acid stress chaperone HdeA.